The sequence spans 330 residues: Replication factor C small subunit (330 aa).

ATP is bound at residue 48–55 (GPPGTGKT).

Belongs to the activator 1 small subunits family. RfcS subfamily. In terms of assembly, heteropentamer composed of four small subunits (RfcS) and one large subunit (RfcL). A homotetramer of this subunit interacts with PCNA heterodimer PCNA1-PCNA2.

In terms of biological role, part of the RFC clamp loader complex which loads the PCNA sliding clamp onto DNA. The complex possesses DNA-dependent ATPase activity. This chain is Replication factor C small subunit (rfcS), found in Saccharolobus solfataricus (strain ATCC 35092 / DSM 1617 / JCM 11322 / P2) (Sulfolobus solfataricus).